Reading from the N-terminus, the 317-residue chain is 2,3,4,5-tetrahydropyridine-2,6-dicarboxylate N-succinyltransferase (317 aa).

Residues Asp-166 and Glu-183 each coordinate Mg(2+). Glu-199 serves as the catalytic Acyl-anhydride intermediate. Succinyl-CoA contacts are provided by residues Arg-201, Gly-216, Ser-219, Ala-242, 257–258 (EA), Gly-265, Lys-277, and 290–293 (RRNS).

This sequence belongs to the type 2 tetrahydrodipicolinate N-succinyltransferase family. In terms of assembly, homotrimer.

It is found in the cytoplasm. It catalyses the reaction (S)-2,3,4,5-tetrahydrodipicolinate + succinyl-CoA + H2O = (S)-2-succinylamino-6-oxoheptanedioate + CoA. The protein operates within amino-acid biosynthesis; L-lysine biosynthesis via DAP pathway; LL-2,6-diaminopimelate from (S)-tetrahydrodipicolinate (succinylase route): step 1/3. In terms of biological role, catalyzes the conversion of the cyclic tetrahydrodipicolinate (THDP) into the acyclic N-succinyl-L-2-amino-6-oxopimelate using succinyl-CoA. The chain is 2,3,4,5-tetrahydropyridine-2,6-dicarboxylate N-succinyltransferase (dapD) from Mycobacterium tuberculosis (strain CDC 1551 / Oshkosh).